A 389-amino-acid polypeptide reads, in one-letter code: 2-deoxystreptamine N-acetyl-D-glucosaminyltransferase (389 aa).

The protein belongs to the glycosyltransferase group 1 family.

The catalysed reaction is 2-deoxystreptamine + UDP-N-acetyl-alpha-D-glucosamine = 2'-N-acetylparomamine + UDP + H(+). It functions in the pathway antibiotic biosynthesis; butirosin biosynthesis. Glycosyltransferase involved in the biosynthesis of butirosin by mediating conversion of 2-deoxystreptamine (2-DOS) to 2'-N-acetylparomamine using UDP-alpha-D-glucosamine as sugar donor. In Niallia circulans (Bacillus circulans), this protein is 2-deoxystreptamine N-acetyl-D-glucosaminyltransferase (btrM).